The following is a 180-amino-acid chain: uncharacterized protein (180 aa).

The stretch at 3–33 forms a coiled coil; sequence QQQSNNSNDNKEQLDRVIESLNRVNSETKQI.

This is an uncharacterized protein from Acanthamoeba polyphaga (Amoeba).